Consider the following 287-residue polypeptide: 4-diphosphocytidyl-2-C-methyl-D-erythritol kinase (287 aa).

Residue lysine 11 is part of the active site. 93–103 (PFGAGLGGGSS) contributes to the ATP binding site. Aspartate 135 is a catalytic residue.

This sequence belongs to the GHMP kinase family. IspE subfamily.

The catalysed reaction is 4-CDP-2-C-methyl-D-erythritol + ATP = 4-CDP-2-C-methyl-D-erythritol 2-phosphate + ADP + H(+). Its pathway is isoprenoid biosynthesis; isopentenyl diphosphate biosynthesis via DXP pathway; isopentenyl diphosphate from 1-deoxy-D-xylulose 5-phosphate: step 3/6. Its function is as follows. Catalyzes the phosphorylation of the position 2 hydroxy group of 4-diphosphocytidyl-2C-methyl-D-erythritol. The protein is 4-diphosphocytidyl-2-C-methyl-D-erythritol kinase of Pelodictyon phaeoclathratiforme (strain DSM 5477 / BU-1).